The primary structure comprises 949 residues: MMKDYYTWTYPDIPEDVAQKLQQLKNSLVVVGIVGRSKCDQANKMQAFGMEPPIEHTAKDGQVQCYYKPGTSSLLLHFETTYDEAILGQMIDVCMEDVDTPFDFDSFYERMRCRFVRMMLLALHACHIVVYVETGPTFDPTLVTVFQLLKFAREQHLMQFLPQMLRETPAARMSEKTRLCAPRILFLFENFPRDEPKTRECVSAYEFQTEDCIYELLRHHTIVTNSSSTSLVALPNNKQFVFFNAHEQLHEDKLLKAIECLNQAMYKPDAKEEEEDLEILELAPFDGFVKPYNLPVDEKELEKQQYKKDHTVWHFLQRHVQDALLGCFDEGSFKQHSQHGQFQLLNIQEWHDYMATLHKLLVENAKDPNHETSNEEYKLFLKCFDESLNYEKKFWTHLCELGLKKGIAAYKNAAPANYGSATHRQLLADATVAFEEEGRGPQAKAALAKLAAICQKYWQDGRQQCEQLSLRSHPCTLPKNLPHEKHNSAVIHISSCNCGRTQGRREDPFSMRQANYEFYEHIAQMCNLCVKVKHYKFPVFEPSVSDYRAAAFEAAFPLLHTAKSGARQGEEGDDEPEDEVVQEQQQPVEEQRQNTASNGCSQPLSPTFGSDLNMSIAGFGASLNESQASSEQLSNSEQNTSSSGTSSADTENELVVELQEPAKKETREDAGPADALPTSTTEYLPGLVHTVSNFGLLPLFPSWSLACVGPSSIYSHNTGLQEHFQSGFLSGANFLLPWDVQLRLVHAPKQQHHTHHQQQHPGKKQQRWKKQGDRLSLKIFVGMEYECSRGHRFMMCAPDRVLRGGADIERDTCSKVVHNNMPLYYPCPCRSQTSYLAQLMRIHVVTPKAPVNIIVDPKVCVGKEKYTFTLGSIVPPRLSQSAYWIIRLPYIYQGDDVIIAPPEKLEPDDPLAGGYLLPGMFGVAETDATQDLNEPGRMGASAAEDFTRI.

Disordered stretches follow at residues 564-607, 624-652, and 748-768; these read SGAR…LSPT, NESQ…DTEN, and PKQQ…QQRW. The segment covering 571 to 581 has biased composition (acidic residues); the sequence is EGDDEPEDEVV. Residues 594–607 are compositionally biased toward polar residues; it reads NTASNGCSQPLSPT. A compositionally biased stretch (low complexity) spans 624–648; the sequence is NESQASSEQLSNSEQNTSSSGTSSA. Basic residues predominate over residues 749–768; it reads KQQHHTHHQQQHPGKKQQRW.

The protein belongs to the SMG8 family.

In terms of biological role, involved in nonsense-mediated decay (NMD) of mRNAs containing premature stop codons. Probable component of kinase complex containing nonC and recruited to stalled ribosomes. The sequence is that of Nonsense-mediated mRNA decay factor SMG8 from Drosophila erecta (Fruit fly).